A 318-amino-acid chain; its full sequence is 4-hydroxy-3-methylbut-2-enyl diphosphate reductase (318 aa).

Cys-12 is a [4Fe-4S] cluster binding site. (2E)-4-hydroxy-3-methylbut-2-enyl diphosphate-binding residues include His-41 and His-74. The dimethylallyl diphosphate site is built by His-41 and His-74. Positions 41 and 74 each coordinate isopentenyl diphosphate. Cys-96 provides a ligand contact to [4Fe-4S] cluster. His-124 contributes to the (2E)-4-hydroxy-3-methylbut-2-enyl diphosphate binding site. Residue His-124 coordinates dimethylallyl diphosphate. His-124 lines the isopentenyl diphosphate pocket. Catalysis depends on Glu-126, which acts as the Proton donor. Thr-167 contributes to the (2E)-4-hydroxy-3-methylbut-2-enyl diphosphate binding site. [4Fe-4S] cluster is bound at residue Cys-197. Ser-225, Ser-226, Asn-227, and Ser-269 together coordinate (2E)-4-hydroxy-3-methylbut-2-enyl diphosphate. Residues Ser-225, Ser-226, Asn-227, and Ser-269 each contribute to the dimethylallyl diphosphate site. Residues Ser-225, Ser-226, Asn-227, and Ser-269 each coordinate isopentenyl diphosphate.

This sequence belongs to the IspH family. It depends on [4Fe-4S] cluster as a cofactor.

It carries out the reaction isopentenyl diphosphate + 2 oxidized [2Fe-2S]-[ferredoxin] + H2O = (2E)-4-hydroxy-3-methylbut-2-enyl diphosphate + 2 reduced [2Fe-2S]-[ferredoxin] + 2 H(+). The catalysed reaction is dimethylallyl diphosphate + 2 oxidized [2Fe-2S]-[ferredoxin] + H2O = (2E)-4-hydroxy-3-methylbut-2-enyl diphosphate + 2 reduced [2Fe-2S]-[ferredoxin] + 2 H(+). It participates in isoprenoid biosynthesis; dimethylallyl diphosphate biosynthesis; dimethylallyl diphosphate from (2E)-4-hydroxy-3-methylbutenyl diphosphate: step 1/1. It functions in the pathway isoprenoid biosynthesis; isopentenyl diphosphate biosynthesis via DXP pathway; isopentenyl diphosphate from 1-deoxy-D-xylulose 5-phosphate: step 6/6. Functionally, catalyzes the conversion of 1-hydroxy-2-methyl-2-(E)-butenyl 4-diphosphate (HMBPP) into a mixture of isopentenyl diphosphate (IPP) and dimethylallyl diphosphate (DMAPP). Acts in the terminal step of the DOXP/MEP pathway for isoprenoid precursor biosynthesis. The chain is 4-hydroxy-3-methylbut-2-enyl diphosphate reductase from Francisella philomiragia subsp. philomiragia (strain ATCC 25017 / CCUG 19701 / FSC 153 / O#319-036).